The sequence spans 352 residues: Holliday junction branch migration complex subunit RuvB (352 aa).

A large ATPase domain (RuvB-L) region spans residues 4–185; sequence ADRLIAATGP…FGIVQRLEFY (182 aa). ATP is bound by residues I24, R25, G66, K69, T70, T71, 132-134, R175, Y185, and R222; that span reads EDF. T70 contacts Mg(2+). The small ATPAse domain (RuvB-S) stretch occupies residues 186–256; it reads STADLATIVS…IADLALNLLD (71 aa). The segment at 259 to 352 is head domain (RuvB-H); that stretch reads ERGFDHQDRR…VDEFLDAVDD (94 aa). 3 residues coordinate DNA: R295, R314, and R319.

The protein belongs to the RuvB family. Homohexamer. Forms an RuvA(8)-RuvB(12)-Holliday junction (HJ) complex. HJ DNA is sandwiched between 2 RuvA tetramers; dsDNA enters through RuvA and exits via RuvB. An RuvB hexamer assembles on each DNA strand where it exits the tetramer. Each RuvB hexamer is contacted by two RuvA subunits (via domain III) on 2 adjacent RuvB subunits; this complex drives branch migration. In the full resolvosome a probable DNA-RuvA(4)-RuvB(12)-RuvC(2) complex forms which resolves the HJ.

The protein localises to the cytoplasm. It carries out the reaction ATP + H2O = ADP + phosphate + H(+). Its function is as follows. The RuvA-RuvB-RuvC complex processes Holliday junction (HJ) DNA during genetic recombination and DNA repair, while the RuvA-RuvB complex plays an important role in the rescue of blocked DNA replication forks via replication fork reversal (RFR). RuvA specifically binds to HJ cruciform DNA, conferring on it an open structure. The RuvB hexamer acts as an ATP-dependent pump, pulling dsDNA into and through the RuvAB complex. RuvB forms 2 homohexamers on either side of HJ DNA bound by 1 or 2 RuvA tetramers; 4 subunits per hexamer contact DNA at a time. Coordinated motions by a converter formed by DNA-disengaged RuvB subunits stimulates ATP hydrolysis and nucleotide exchange. Immobilization of the converter enables RuvB to convert the ATP-contained energy into a lever motion, pulling 2 nucleotides of DNA out of the RuvA tetramer per ATP hydrolyzed, thus driving DNA branch migration. The RuvB motors rotate together with the DNA substrate, which together with the progressing nucleotide cycle form the mechanistic basis for DNA recombination by continuous HJ branch migration. Branch migration allows RuvC to scan DNA until it finds its consensus sequence, where it cleaves and resolves cruciform DNA. This Pseudomonas fluorescens (strain ATCC BAA-477 / NRRL B-23932 / Pf-5) protein is Holliday junction branch migration complex subunit RuvB.